Here is a 570-residue protein sequence, read N- to C-terminus: Proline--tRNA ligase (570 aa).

This sequence belongs to the class-II aminoacyl-tRNA synthetase family. ProS type 1 subfamily. As to quaternary structure, homodimer.

Its subcellular location is the cytoplasm. The enzyme catalyses tRNA(Pro) + L-proline + ATP = L-prolyl-tRNA(Pro) + AMP + diphosphate. In terms of biological role, catalyzes the attachment of proline to tRNA(Pro) in a two-step reaction: proline is first activated by ATP to form Pro-AMP and then transferred to the acceptor end of tRNA(Pro). As ProRS can inadvertently accommodate and process non-cognate amino acids such as alanine and cysteine, to avoid such errors it has two additional distinct editing activities against alanine. One activity is designated as 'pretransfer' editing and involves the tRNA(Pro)-independent hydrolysis of activated Ala-AMP. The other activity is designated 'posttransfer' editing and involves deacylation of mischarged Ala-tRNA(Pro). The misacylated Cys-tRNA(Pro) is not edited by ProRS. This Neisseria gonorrhoeae (strain ATCC 700825 / FA 1090) protein is Proline--tRNA ligase.